We begin with the raw amino-acid sequence, 234 residues long: Sugar fermentation stimulation protein A (234 aa).

The segment at residues 201–220 is a DNA-binding region (H-T-H motif); that stretch reads LLSEAQNKGVEVLAYKAELS.

Belongs to the SfsA family.

Binds to DNA non-specifically. Could be a regulatory factor involved in maltose metabolism. In Salmonella dublin (strain CT_02021853), this protein is Sugar fermentation stimulation protein A.